A 743-amino-acid chain; its full sequence is Conserved oligomeric Golgi complex subunit 8 (743 aa).

2 disordered regions span residues 549-672 and 704-743; these read EDGP…TEPE and TQDD…KKDD. 4 stretches are compositionally biased toward basic and acidic residues: residues 563-581, 594-621, 633-647, and 654-664; these read ESVK…HGTD, PVKE…HETP, SEAK…HLEL, and QEIREQEHKEV. Residues 704–726 show a composition bias toward acidic residues; the sequence is TQDDPIEEEEGWGWGDDDGEEQE. The segment covering 727–743 has biased composition (basic and acidic residues); it reads ISSKEVESPKEKCKKDD.

Belongs to the COG8 family. In terms of assembly, component of the conserved oligomeric Golgi complex which is composed of eight different subunits and is required for normal Golgi morphology and localization.

The protein resides in the golgi apparatus membrane. Functionally, required for normal Golgi function. In Caenorhabditis elegans, this protein is Conserved oligomeric Golgi complex subunit 8 (cogc-8).